The following is a 119-amino-acid chain: HTH-type transcriptional regulator SarX (119 aa).

Residues 55–78 (LKTAMDELDLSRTKLLVSIRRLIE) constitute a DNA-binding region (H-T-H motif).

Belongs to the SarA family.

It localises to the cytoplasm. Involved in the regulation of virulence genes. Acts as a repressor of the agr locus and consequently targets genes regulated by the agr system such as sspA, hla and hlb. Binds directly to the agr promoter region. The polypeptide is HTH-type transcriptional regulator SarX (sarX) (Staphylococcus aureus (strain USA300)).